Reading from the N-terminus, the 55-residue chain is Chromatin protein Cren7 (55 aa).

Belongs to the Cren7 family. As to quaternary structure, monomer. In terms of processing, methylated at multiple sites, to varying extents.

The protein resides in the chromosome. It localises to the cytoplasm. A chromatin protein, binds double-stranded DNA without sequence specificity. Constrains negative DNA supercoils. The polypeptide is Chromatin protein Cren7 (Ignicoccus hospitalis (strain KIN4/I / DSM 18386 / JCM 14125)).